A 98-amino-acid polypeptide reads, in one-letter code: DNA-binding protein Fis (98 aa).

Positions 74–93 form a DNA-binding region, H-T-H motif; the sequence is QTRAALMMGINRGTLRKKLK.

The protein belongs to the transcriptional regulatory Fis family. In terms of assembly, homodimer.

In terms of biological role, activates ribosomal RNA transcription. Plays a direct role in upstream activation of rRNA promoters. In Photorhabdus laumondii subsp. laumondii (strain DSM 15139 / CIP 105565 / TT01) (Photorhabdus luminescens subsp. laumondii), this protein is DNA-binding protein Fis.